Reading from the N-terminus, the 481-residue chain is Tripartite motif-containing protein 10 (481 aa).

The segment at 16–61 adopts an RING-type zinc-finger fold; that stretch reads CPICQGTLREPVTIDCGHNFCRACLTRYCEIPGPDLEESPTCPLCK. The B box-type zinc-finger motif lies at 94–135; it reads GEEDVCQEHGEKIYFFCEDDEMQLCVVCREAGEHATHTMRFL. Zn(2+) contacts are provided by C99, H102, C121, and H127. Positions 150-177 form a coiled coil; that stretch reads LKCLRKEREEIQEIQSRENKRMQVLLTQ. Residues 292 to 481 enclose the B30.2/SPRY domain; sequence REMKMFLEKL…GRGSSFSLSS (190 aa).

The protein belongs to the TRIM/RBCC family. In terms of assembly, interacts with IFNAR1; this interaction prevents association of IFNAR1 with TYK2.

It localises to the cytoplasm. Functionally, E3 ligase that plays an essential role in the differentiation and survival of terminal erythroid cells. May directly bind to PTEN and promote its ubiquitination, resulting in its proteasomal degradation and activation of hypertrophic signaling. In addition, plays a role in immune response regulation by repressing the phosphorylation of STAT1 and STAT2 in the interferon/JAK/STAT signaling pathway independent of its E3 ligase activity. Mechanistically, interacts with the intracellular domain of IFNAR1 and thereby inhibits the association between TYK2 and IFNAR1. The polypeptide is Tripartite motif-containing protein 10 (TRIM10) (Homo sapiens (Human)).